The following is a 454-amino-acid chain: MSTITLLCIALAGVIMLLLLVIKAKVQPFVALLLVSLLVALAAGIPAGEVGKVMIAGMGGVLGSVTIIIGLGAMLGRMIEHSGGAESLANYFSRKLGDKRTIAALTLAAFFLGIPVFFDVGFIILAPIIYGFAKVAKISPLKFGLPVAGIMLTVHVAVPPHPGPVAAAGLLHADIGWLTIIGIAISIPVGVVGYFAAKIINKRQYAMSVEVLEQMQLAPASEEGATKLSDKINPPGVALVTSLIVIPIAIIMAGTVSATLMPPSHPLLGTLQLIGSPMVALMIALVLAFWLLALRRGWSLQHTSDIMGSALPTAAVVILVTGAGGVFGKVLVESGVGKALANMLQMIDLPLLPAAFIISLALRASQGSATVAILTTGGLLSEAVMGLNPIQCVLVTLAACFGGLGASHINDSGFWIVTKYLGLSVADGLKTWTVLTTILGFTGFLITWCVWAVI.

Residue Met1 is a topological domain, periplasmic. The chain crosses the membrane as a helical span at residues 2 to 22; the sequence is STITLLCIALAGVIMLLLLVI. The Cytoplasmic portion of the chain corresponds to 23–27; it reads KAKVQ. Residues 28–48 form a helical membrane-spanning segment; the sequence is PFVALLLVSLLVALAAGIPAG. The Periplasmic segment spans residues 49 to 52; the sequence is EVGK. A helical transmembrane segment spans residues 53–73; the sequence is VMIAGMGGVLGSVTIIIGLGA. Residues 74–108 lie on the Cytoplasmic side of the membrane; it reads MLGRMIEHSGGAESLANYFSRKLGDKRTIAALTLA. The chain crosses the membrane as a helical span at residues 109 to 129; that stretch reads AFFLGIPVFFDVGFIILAPII. Residues 130–137 are Periplasmic-facing; the sequence is YGFAKVAK. A helical membrane pass occupies residues 138-158; sequence ISPLKFGLPVAGIMLTVHVAV. Residues 159–174 lie on the Cytoplasmic side of the membrane; sequence PPHPGPVAAAGLLHAD. Residues 175–195 form a helical membrane-spanning segment; that stretch reads IGWLTIIGIAISIPVGVVGYF. Topologically, residues 196–235 are periplasmic; sequence AAKIINKRQYAMSVEVLEQMQLAPASEEGATKLSDKINPP. Residues 236-256 form a helical membrane-spanning segment; the sequence is GVALVTSLIVIPIAIIMAGTV. The Cytoplasmic segment spans residues 257-273; the sequence is SATLMPPSHPLLGTLQL. A helical membrane pass occupies residues 274–294; the sequence is IGSPMVALMIALVLAFWLLAL. At 295 to 305 the chain is on the periplasmic side; the sequence is RRGWSLQHTSD. A helical membrane pass occupies residues 306–326; the sequence is IMGSALPTAAVVILVTGAGGV. At 327–341 the chain is on the cytoplasmic side; it reads FGKVLVESGVGKALA. Residues 342–362 traverse the membrane as a helical segment; sequence NMLQMIDLPLLPAAFIISLAL. The Periplasmic segment spans residues 363–383; that stretch reads RASQGSATVAILTTGGLLSEA. A helical membrane pass occupies residues 384-404; sequence VMGLNPIQCVLVTLAACFGGL. Over 405–433 the chain is Cytoplasmic; the sequence is GASHINDSGFWIVTKYLGLSVADGLKTWT. The helical transmembrane segment at 434-454 threads the bilayer; that stretch reads VLTTILGFTGFLITWCVWAVI.

Belongs to the GntP permease family.

It localises to the cell inner membrane. This is Inner membrane permease YgbN (ygbN) from Escherichia coli (strain K12).